The following is a 166-amino-acid chain: Large ribosomal subunit protein mL49 (166 aa).

Residues 56 to 78 (RIPDPPKHEHYPTPSGWQPPRDP) form a disordered region.

Belongs to the mitochondrion-specific ribosomal protein mL49 family. In terms of assembly, component of the mitochondrial large ribosomal subunit (mt-LSU). Mature mammalian 55S mitochondrial ribosomes consist of a small (28S) and a large (39S) subunit. The 28S small subunit contains a 12S ribosomal RNA (12S mt-rRNA) and 30 different proteins. The 39S large subunit contains a 16S rRNA (16S mt-rRNA), a copy of mitochondrial valine transfer RNA (mt-tRNA(Val)), which plays an integral structural role, and 52 different proteins. Interacts with OXA1L. In terms of tissue distribution, ubiquitous.

It localises to the mitochondrion. The sequence is that of Large ribosomal subunit protein mL49 (MRPL49) from Homo sapiens (Human).